The chain runs to 440 residues: MQAYFDQLDRVRYEGSKSSNPLAFRHYNPDELVLGKRMEEHLRFAACYWHTFCWNGADMFGVGAFNRPWQQPGEALALAKRKADVAFEFFHKLHVPFYCFHDVDVSPEGASLKEYINNFAQMVDVLAGKQEESGVKLLWGTANCFTNPRYGAGAATNPDPEVFSWAATQVVTAMEATHKLGGENYVLWGGREGYETLLNTDLRQEREQLGRFMQMVVEHKHKIGFQGTLLIEPKPQEPTKHQYDYDAATVYGFLKQFGLEKEIKLNIEANHATLAGHSFHHEIATAIALGLFGSVDANRGDAQLGWDTDQFPNSVEENALVMYEILKAGGFTTGGLNFDAKVRRQSTDKYDLFYGHIGAMDTMALALKIAARMIEDGELDKRIAQRYSGWNSELGQQILKGQMSLADLAKYAQEHNLSPVHQSGRQEQLENLVNHYLFDK.

Active-site residues include H101 and D104. Positions 232, 268, 271, 296, 307, 309, and 339 each coordinate Mg(2+).

The protein belongs to the xylose isomerase family. Homotetramer. The cofactor is Mg(2+).

It is found in the cytoplasm. It catalyses the reaction alpha-D-xylose = alpha-D-xylulofuranose. This is Xylose isomerase from Escherichia coli (strain SMS-3-5 / SECEC).